The primary structure comprises 58 residues: uncharacterized protein (58 aa).

Its subcellular location is the plastid. It localises to the chloroplast. This is an uncharacterized protein from Porphyra purpurea (Red seaweed).